A 150-amino-acid polypeptide reads, in one-letter code: Ribonuclease K6 (150 aa).

An N-terminal signal peptide occupies residues 1 to 23 (MVLCFPLLLLLLVLWGPVCPLHA). His38 functions as the Proton acceptor in the catalytic mechanism. Intrachain disulfides connect Cys46–Cys104, Cys60–Cys114, Cys78–Cys129, and Cys85–Cys92. N-linked (GlcNAc...) asparagine glycosylation occurs at Asn55. Residues 61 to 65 (KHQNT) and Lys86 contribute to the substrate site. Asn100 carries N-linked (GlcNAc...) asparagine glycosylation. Residue Arg105 participates in substrate binding. Residue His145 is the Proton donor of the active site.

It belongs to the pancreatic ribonuclease family. As to quaternary structure, interacts (via N-terminus) with bacterial lipopolysaccharide (LPS).

Its subcellular location is the secreted. The protein localises to the lysosome. It is found in the cytoplasmic granule. In terms of biological role, ribonuclease which shows a preference for the pyrimidines uridine and cytosine. Has potent antibacterial activity against a range of Gram-positive and Gram-negative bacteria, including P.aeruginosa, A.baumanii, M.luteus, S.aureus, E.faecalis, E.faecium, S.saprophyticus and E.coli. Causes loss of bacterial membrane integrity, and also promotes agglutination of Gram-negative bacteria. Probably contributes to urinary tract sterility. Bactericidal activity is independent of RNase activity. In Gorilla gorilla gorilla (Western lowland gorilla), this protein is Ribonuclease K6 (RNASE6).